A 284-amino-acid chain; its full sequence is D-tagatose-1,6-bisphosphate aldolase subunit GatY (284 aa).

The Proton donor role is filled by D82. The Zn(2+) site is built by H83 and H180. Position 181 (G181) interacts with dihydroxyacetone phosphate. H208 is a binding site for Zn(2+). Dihydroxyacetone phosphate-binding positions include G209–S211 and N230–T233.

It belongs to the class II fructose-bisphosphate aldolase family. TagBP aldolase GatY subfamily. Forms a complex with GatZ. The cofactor is Zn(2+).

It catalyses the reaction D-tagatofuranose 1,6-bisphosphate = D-glyceraldehyde 3-phosphate + dihydroxyacetone phosphate. It participates in carbohydrate metabolism; D-tagatose 6-phosphate degradation; D-glyceraldehyde 3-phosphate and glycerone phosphate from D-tagatose 6-phosphate: step 2/2. Its function is as follows. Catalytic subunit of the tagatose-1,6-bisphosphate aldolase GatYZ, which catalyzes the reversible aldol condensation of dihydroxyacetone phosphate (DHAP or glycerone-phosphate) with glyceraldehyde 3-phosphate (G3P) to produce tagatose 1,6-bisphosphate (TBP). Requires GatZ subunit for full activity and stability. Is involved in the catabolism of galactitol. This chain is D-tagatose-1,6-bisphosphate aldolase subunit GatY, found in Escherichia coli (strain K12 / MC4100 / BW2952).